A 186-amino-acid chain; its full sequence is Single-stranded DNA-binding protein 1 (186 aa).

Residues 1-108 form the SSB domain; that stretch reads MDATVTVVGN…LEIDEIGPTL (108 aa). Residues 119-186 are disordered; sequence TQAGHGVSPD…EDFDSDEVPF (68 aa). Residues 175–186 are compositionally biased toward acidic residues; that stretch reads SYEDFDSDEVPF.

Homotetramer.

This is Single-stranded DNA-binding protein 1 (ssb1) from Tropheryma whipplei (strain Twist) (Whipple's bacillus).